The following is a 207-amino-acid chain: Large ribosomal subunit protein uL4 (207 aa).

The interval 58–85 (AGSGKKPFKQKGTGQARQGCRRAPQYPG) is disordered.

Belongs to the universal ribosomal protein uL4 family. Part of the 50S ribosomal subunit.

In terms of biological role, one of the primary rRNA binding proteins, this protein initially binds near the 5'-end of the 23S rRNA. It is important during the early stages of 50S assembly. It makes multiple contacts with different domains of the 23S rRNA in the assembled 50S subunit and ribosome. Forms part of the polypeptide exit tunnel. The polypeptide is Large ribosomal subunit protein uL4 (Geotalea uraniireducens (strain Rf4) (Geobacter uraniireducens)).